A 375-amino-acid chain; its full sequence is Carbamoyl phosphate synthase small chain (375 aa).

The tract at residues 1 to 186 (MRALLALEDG…LEPGGCAWVG (186 aa)) is CPSase. Ser45, Gly238, and Gly240 together coordinate L-glutamine. In terms of domain architecture, Glutamine amidotransferase type-1 spans 190–375 (RLVVYDFGIK…RNMVREAAGC (186 aa)). Cys265 acts as the Nucleophile in catalysis. Residues Leu266, Gln269, Asn307, Gly309, and Phe310 each contribute to the L-glutamine site. Catalysis depends on residues His348 and Glu350.

The protein belongs to the CarA family. In terms of assembly, composed of two chains; the small (or glutamine) chain promotes the hydrolysis of glutamine to ammonia, which is used by the large (or ammonia) chain to synthesize carbamoyl phosphate. Tetramer of heterodimers (alpha,beta)4.

The catalysed reaction is hydrogencarbonate + L-glutamine + 2 ATP + H2O = carbamoyl phosphate + L-glutamate + 2 ADP + phosphate + 2 H(+). It carries out the reaction L-glutamine + H2O = L-glutamate + NH4(+). It participates in amino-acid biosynthesis; L-arginine biosynthesis; carbamoyl phosphate from bicarbonate: step 1/1. It functions in the pathway pyrimidine metabolism; UMP biosynthesis via de novo pathway; (S)-dihydroorotate from bicarbonate: step 1/3. Small subunit of the glutamine-dependent carbamoyl phosphate synthetase (CPSase). CPSase catalyzes the formation of carbamoyl phosphate from the ammonia moiety of glutamine, carbonate, and phosphate donated by ATP, constituting the first step of 2 biosynthetic pathways, one leading to arginine and/or urea and the other to pyrimidine nucleotides. The small subunit (glutamine amidotransferase) binds and cleaves glutamine to supply the large subunit with the substrate ammonia. The sequence is that of Carbamoyl phosphate synthase small chain from Nitratidesulfovibrio vulgaris (strain ATCC 29579 / DSM 644 / CCUG 34227 / NCIMB 8303 / VKM B-1760 / Hildenborough) (Desulfovibrio vulgaris).